A 161-amino-acid polypeptide reads, in one-letter code: Small ribosomal subunit protein eS6 (161 aa).

The disordered stretch occupies residues 119 to 161; the sequence is VLLGEEEPEDADDDGDSDVDADEATDTDAGSEEDNDDDIADAE. Residues 122 to 161 show a composition bias toward acidic residues; the sequence is GEEEPEDADDDGDSDVDADEATDTDAGSEEDNDDDIADAE.

It belongs to the eukaryotic ribosomal protein eS6 family.

This is Small ribosomal subunit protein eS6 from Haloquadratum walsbyi (strain DSM 16790 / HBSQ001).